Reading from the N-terminus, the 117-residue chain is Ribosome-binding factor A (117 aa).

It belongs to the RbfA family. As to quaternary structure, monomer. Binds 30S ribosomal subunits, but not 50S ribosomal subunits or 70S ribosomes.

It localises to the cytoplasm. One of several proteins that assist in the late maturation steps of the functional core of the 30S ribosomal subunit. Associates with free 30S ribosomal subunits (but not with 30S subunits that are part of 70S ribosomes or polysomes). Required for efficient processing of 16S rRNA. May interact with the 5'-terminal helix region of 16S rRNA. The chain is Ribosome-binding factor A from Leuconostoc mesenteroides subsp. mesenteroides (strain ATCC 8293 / DSM 20343 / BCRC 11652 / CCM 1803 / JCM 6124 / NCDO 523 / NBRC 100496 / NCIMB 8023 / NCTC 12954 / NRRL B-1118 / 37Y).